A 409-amino-acid polypeptide reads, in one-letter code: Multifunctional CCA protein (409 aa).

Residues Gly-8 and Arg-11 each contribute to the ATP site. Residues Gly-8 and Arg-11 each coordinate CTP. Residues Asp-21 and Asp-23 each contribute to the Mg(2+) site. ATP contacts are provided by Arg-91, Arg-137, and Arg-140. The CTP site is built by Arg-91, Arg-137, and Arg-140. An HD domain is found at 228-329; it reads TGIHTLMVVE…ITLMDQNDAW (102 aa).

Belongs to the tRNA nucleotidyltransferase/poly(A) polymerase family. Bacterial CCA-adding enzyme type 1 subfamily. As to quaternary structure, monomer. Can also form homodimers and oligomers. It depends on Mg(2+) as a cofactor. The cofactor is Ni(2+).

It catalyses the reaction a tRNA precursor + 2 CTP + ATP = a tRNA with a 3' CCA end + 3 diphosphate. It carries out the reaction a tRNA with a 3' CCA end + 2 CTP + ATP = a tRNA with a 3' CCACCA end + 3 diphosphate. Functionally, catalyzes the addition and repair of the essential 3'-terminal CCA sequence in tRNAs without using a nucleic acid template. Adds these three nucleotides in the order of C, C, and A to the tRNA nucleotide-73, using CTP and ATP as substrates and producing inorganic pyrophosphate. tRNA 3'-terminal CCA addition is required both for tRNA processing and repair. Also involved in tRNA surveillance by mediating tandem CCA addition to generate a CCACCA at the 3' terminus of unstable tRNAs. While stable tRNAs receive only 3'-terminal CCA, unstable tRNAs are marked with CCACCA and rapidly degraded. This Psychromonas ingrahamii (strain DSM 17664 / CCUG 51855 / 37) protein is Multifunctional CCA protein.